Consider the following 590-residue polypeptide: Aspartate--tRNA(Asp/Asn) ligase (590 aa).

Residue glutamate 175 participates in L-aspartate binding. The aspartate stretch occupies residues 199–202 (QQYK). Residues arginine 221 and histidine 450 each contribute to the L-aspartate site. Residue 221–223 (RDE) participates in ATP binding. Glutamate 484 lines the ATP pocket. Arginine 491 is an L-aspartate binding site. An ATP-binding site is contributed by 536 to 539 (GVDR).

Belongs to the class-II aminoacyl-tRNA synthetase family. Type 1 subfamily. Homodimer.

It is found in the cytoplasm. The enzyme catalyses tRNA(Asx) + L-aspartate + ATP = L-aspartyl-tRNA(Asx) + AMP + diphosphate. Aspartyl-tRNA synthetase with relaxed tRNA specificity since it is able to aspartylate not only its cognate tRNA(Asp) but also tRNA(Asn). Reaction proceeds in two steps: L-aspartate is first activated by ATP to form Asp-AMP and then transferred to the acceptor end of tRNA(Asp/Asn). The chain is Aspartate--tRNA(Asp/Asn) ligase from Nitrobacter hamburgensis (strain DSM 10229 / NCIMB 13809 / X14).